The primary structure comprises 238 residues: DNA repair protein RecO (238 aa).

It belongs to the RecO family.

Involved in DNA repair and RecF pathway recombination. The polypeptide is DNA repair protein RecO (Cereibacter sphaeroides (strain ATCC 17023 / DSM 158 / JCM 6121 / CCUG 31486 / LMG 2827 / NBRC 12203 / NCIMB 8253 / ATH 2.4.1.) (Rhodobacter sphaeroides)).